Consider the following 266-residue polypeptide: Protein crossbronx-like (266 aa).

In terms of domain architecture, UBC core spans 15-178 (KQGYHILAEY…VQEQAILSRN (164 aa)). Residues 226–266 (SEYLGHIDSSRQMDEEETNQLEKLHRGRIPEPQREEAEVSL) form a disordered region. The span at 245-266 (QLEKLHRGRIPEPQREEAEVSL) shows a compositional bias: basic and acidic residues.

Belongs to the ubiquitin-conjugating enzyme family. FTS subfamily.

This chain is Protein crossbronx-like, found in Drosophila sechellia (Fruit fly).